The primary structure comprises 21 residues: Conchiolin protein p20 (21 aa).

Residues 1-14 (YQRXSRYYYYXGPP) are compositionally biased toward low complexity. The segment at 1-21 (YQRXSRYYYYXGPPDDIDDRY) is disordered.

Belongs to the N16 matrix protein family. Homooligomer; disulfide-linked. May also be disulfide-linked to insoluble organic matrix. According to PubMed:11250534, amino acids 4 and 11 may be sulfated or phosphorylated. By similarity with the N14 matrix protein, amino-acid 4 may be a cysteine involved in a disulfide bond. In terms of tissue distribution, component of conchiolin, the organic matrix of nacre. Is dispersed in calcium carbonate and also linked by disulfide bonds to the organic core of nacre.

It localises to the secreted. The protein localises to the extracellular space. It is found in the extracellular matrix. In terms of biological role, may be specifically involved in the formation of the nacreous layer. The chain is Conchiolin protein p20 from Pinctada maxima (Silver-lipped pearl oyster).